We begin with the raw amino-acid sequence, 177 residues long: Cytochrome c oxidase assembly protein CtaG (177 aa).

At Met-1–Thr-8 the chain is on the cytoplasmic side. A helical; Signal-anchor for type II membrane protein membrane pass occupies residues Ile-9–Leu-29. Topologically, residues Tyr-30–Lys-177 are periplasmic.

This sequence belongs to the COX11/CtaG family.

The protein localises to the cell inner membrane. Functionally, exerts its effect at some terminal stage of cytochrome c oxidase synthesis, probably by being involved in the insertion of the copper B into subunit I. This is Cytochrome c oxidase assembly protein CtaG from Ehrlichia ruminantium (strain Gardel).